The sequence spans 421 residues: UDP-N-acetylglucosamine 1-carboxyvinyltransferase (421 aa).

Lys-22–Asn-23 is a phosphoenolpyruvate binding site. Arg-92 provides a ligand contact to UDP-N-acetyl-alpha-D-glucosamine. The active-site Proton donor is Cys-116. A 2-(S-cysteinyl)pyruvic acid O-phosphothioketal modification is found at Cys-116. UDP-N-acetyl-alpha-D-glucosamine contacts are provided by Asp-307 and Val-329.

Belongs to the EPSP synthase family. MurA subfamily.

The protein resides in the cytoplasm. It catalyses the reaction phosphoenolpyruvate + UDP-N-acetyl-alpha-D-glucosamine = UDP-N-acetyl-3-O-(1-carboxyvinyl)-alpha-D-glucosamine + phosphate. Its pathway is cell wall biogenesis; peptidoglycan biosynthesis. Functionally, cell wall formation. Adds enolpyruvyl to UDP-N-acetylglucosamine. This chain is UDP-N-acetylglucosamine 1-carboxyvinyltransferase, found in Kosmotoga olearia (strain ATCC BAA-1733 / DSM 21960 / TBF 19.5.1).